We begin with the raw amino-acid sequence, 258 residues long: Uridylate cyclase (258 aa).

The region spanning 50–190 is the Guanylate cyclase domain; sequence AAIFIDLRGS…DVVNKASKMC (141 aa). An a ribonucleoside 5'-triphosphate-binding site is contributed by F53. The Mn(2+) site is built by D55 and D102.

The protein belongs to the adenylyl cyclase class-4/guanylyl cyclase family. Pyrimidine cyclase subfamily. In terms of assembly, homodimer. The cofactor is Mn(2+).

It localises to the cytoplasm. It carries out the reaction UTP = 3',5'-cyclic UMP + diphosphate. Its function is as follows. Pycsar (pyrimidine cyclase system for antiphage resistance) provides immunity against bacteriophage. The pyrimidine cyclase (PycC) synthesizes cyclic nucleotides in response to infection; these serve as specific second messenger signals. The signals activate the adjacent effector, leading to bacterial cell death and abortive phage infection. A clade C Pycsar system. Functionally, the pyrimidine cyclase gene of a two-gene Pycsar system, weakly generates cyclic UMP (cUMP) from UTP, has little to no activity on ATP, CTP or GTP. Expression of this and adjacent effector GmPycTM (AC P0DV43) probably confers resistance to bacteriophage. The genes are probably only expressed in response to bacteriophage infection. This is Uridylate cyclase from Gulbenkiania mobilis.